A 1495-amino-acid chain; its full sequence is Nuclear pore complex protein NUP160 (1495 aa).

As to quaternary structure, part of the nuclear pore complex (NPC). The NPC has an eight-fold symmetrical structure comprising a central transport channel and two rings, the cytoplasmic and nuclear rings, to which eight filaments are attached. The cytoplasmic filaments have loose ends, while the nuclear filaments are joined in a distal ring, forming a nuclear basket. NPCs are highly dynamic in configuration and composition, and can be devided in 3 subcomplexes, the NUP62 subcomplex, the NUP107-160 subcomplex and the NUP93 subcomplex, containing approximately 30 different nucleoporin proteins. Expressed in roots, stems, anthers, siliques and vascular tissues of cotyledons, leaves and hypocotyls.

The protein resides in the nucleus membrane. Its subcellular location is the nucleus. It is found in the nuclear pore complex. Its function is as follows. Contributes to the transfer of mature mRNA from the nucleus to the cytosol. Required for both R gene-mediated and basal disease resistance. RNA export seems to play a critical role in stress responses and regulation of plant growth and development. Required for proper expression of factors associated with auxin signaling. This chain is Nuclear pore complex protein NUP160, found in Arabidopsis thaliana (Mouse-ear cress).